The sequence spans 346 residues: Small ribosomal subunit biogenesis GTPase RsgA (346 aa).

The segment at 1–26 (MAKRKLTQNQTRRIQSNNAKTLHRHK) is disordered. Over residues 7 to 20 (TQNQTRRIQSNNAK) the composition is skewed to polar residues. A CP-type G domain is found at 103 to 271 (ENEISRPDYY…LIDSPGIREF (169 aa)). GTP-binding positions include 159–162 (NKVD) and 213–221 (GQSGVGKSS). Zn(2+) is bound by residues cysteine 295, cysteine 300, histidine 302, and cysteine 308.

Belongs to the TRAFAC class YlqF/YawG GTPase family. RsgA subfamily. In terms of assembly, monomer. Associates with 30S ribosomal subunit, binds 16S rRNA. Zn(2+) serves as cofactor.

It is found in the cytoplasm. Functionally, one of several proteins that assist in the late maturation steps of the functional core of the 30S ribosomal subunit. Helps release RbfA from mature subunits. May play a role in the assembly of ribosomal proteins into the subunit. Circularly permuted GTPase that catalyzes slow GTP hydrolysis, GTPase activity is stimulated by the 30S ribosomal subunit. The chain is Small ribosomal subunit biogenesis GTPase RsgA from Haemophilus influenzae (strain PittGG).